A 213-amino-acid polypeptide reads, in one-letter code: Nicolin-1 (213 aa).

Part of the neuronal tubulin polyglutamylase complex which contains TPGS1, TPGS2, TTLL1, LRRC49 and NICN1. In terms of tissue distribution, high expression level is found in brain, testis, liver and kidney. Weak expression in spleen, leukocytes, small intestin and colon.

The protein resides in the nucleus. In Mus musculus (Mouse), this protein is Nicolin-1 (Nicn1).